Consider the following 382-residue polypeptide: Gap junction alpha-1 protein (382 aa).

Residues 2-23 (GDWSALGKLLDKVQAYSTAGGK) lie on the Cytoplasmic side of the membrane. Position 5 is a phosphoserine (Ser5). Residues 24–44 (VWLSVLFIFRILLLGTAVESA) traverse the membrane as a helical segment. At 45–76 (WGDEQSAFRCNTQQPGCENVCYDKSFPISHVR) the chain is on the extracellular side. Disulfide bonds link Cys54–Cys192 and Cys187–Cys198. Residues 77–97 (FWVLQIIFVSVPTLLYLAHVF) form a helical membrane-spanning segment. Residues 98-155 (YVMRKEEKLNKKEEELKVAQTDGVNVEMHLKQIEIKKFKYGIEEHGKVKMRGGLLRTY) are Cytoplasmic-facing. Lys144 is covalently cross-linked (Glycyl lysine isopeptide (Lys-Gly) (interchain with G-Cter in SUMO)). Residues 156-176 (IISILFKSIFEVAFLLIQWYI) traverse the membrane as a helical segment. Topologically, residues 177 to 207 (YGFSLSAVYTCKRDPCPHQVDCFLSRPTEKT) are extracellular. The helical transmembrane segment at 208 to 228 (IFIIFMLVVSLVSLALNIIEL) threads the bilayer. Over 229–382 (FYVFFKGVKD…SRPRPDDLEI (154 aa)) the chain is Cytoplasmic. A Glycyl lysine isopeptide (Lys-Gly) (interchain with G-Cter in SUMO) cross-link involves residue Lys237. Positions 244 to 382 (SDPYHATSGA…SRPRPDDLEI (139 aa)) are interaction with NOV. Tyr247 carries the post-translational modification Phosphotyrosine. 2 positions are modified to phosphoserine: Ser255 and Ser262. Residues 264–382 (KYAYFNGCSS…SRPRPDDLEI (119 aa)) form an interaction with UBQLN4 region. Cys271 carries the post-translational modification S-nitrosocysteine. Residue Thr275 is modified to Phosphothreonine. The tract at residues 279–300 (SPMSPPGYKPVTGDRNNSSCRN) is disordered. Residues Ser306 and Ser314 each carry the phosphoserine modification. Over residues 317–332 (QNRMGQAGSTISNSHA) the composition is skewed to polar residues. The tract at residues 317 to 382 (QNRMGQAGST…SRPRPDDLEI (66 aa)) is disordered. A Phosphoserine; by CK1 modification is found at Ser325. Thr326 is subject to Phosphothreonine. Phosphoserine; by CK1 is present on residues Ser328 and Ser330. Residues Ser344 and Ser365 each carry the phosphoserine modification. Residues 362-374 (RPSSRASSRASSR) are compositionally biased toward low complexity. Phosphoserine; by PKC/PRKCG and PKC/PRKCD is present on Ser368. Residues Ser369 and Ser373 each carry the phosphoserine modification.

This sequence belongs to the connexin family. Alpha-type (group II) subfamily. In terms of assembly, a connexon is composed of a hexamer of connexins. Interacts with SGSM3. Interacts with RIC1/CIP150. Interacts with CNST and CSNK1D. Interacts (via C-terminus) with TJP1. Interacts (via C-terminus) with SRC (via SH3 domain). Interacts (not ubiquitinated) with UBQLN4 (via UBA domain). Interacts with NOV. Interacts with TMEM65. Interacts with ANK3/ANKG and PKP2. Post-translationally, phosphorylation at Ser-325, Ser-328 and Ser-330 by CK1 modulates gap junction assembly. Phosphorylated at Ser-368 by PRKCG; phosphorylation induces disassembly of gap junction plaques and inhibition of gap junction activity. Phosphorylation at Ser-368 by PRKCD triggers its internalization into small vesicles leading to proteasome-mediated degradation. In terms of processing, sumoylated with SUMO1, SUMO2 and SUMO3, which may regulate the level of functional Cx43 gap junctions at the plasma membrane. May be desumoylated by SENP1 or SENP2. S-nitrosylation at Cys-271 is enriched at the muscle endothelial gap junction in arteries, it augments channel permeability and may regulate of smooth muscle cell to endothelial cell communication. Post-translationally, acetylated in the developing cortex; leading to delocalization from the cell membrane.

The protein localises to the cell membrane. The protein resides in the cell junction. It is found in the gap junction. Its subcellular location is the endoplasmic reticulum. Its function is as follows. Gap junction protein that acts as a regulator of bladder capacity. A gap junction consists of a cluster of closely packed pairs of transmembrane channels, the connexons, through which materials of low MW diffuse from one cell to a neighboring cell. May play a critical role in the physiology of hearing by participating in the recycling of potassium to the cochlear endolymph. Negative regulator of bladder functional capacity: acts by enhancing intercellular electrical and chemical transmission, thus sensitizing bladder muscles to cholinergic neural stimuli and causing them to contract. May play a role in cell growth inhibition through the regulation of NOV expression and localization. Plays an essential role in gap junction communication in the ventricles. This chain is Gap junction alpha-1 protein (GJA1), found in Macaca fascicularis (Crab-eating macaque).